The sequence spans 68 residues: MIILSNKPNIRGIKNVVEDIKYRNQLIGRDGRLFAGLIATRISGIAIGFLLAVLLVGVPAMMSILGVI.

Residues 45–65 (IAIGFLLAVLLVGVPAMMSIL) form a helical membrane-spanning segment.

The protein belongs to the MtrF family. The complex is composed of 8 subunits; MtrA, MtrB, MtrC, MtrD, MtrE, MtrF, MtrG and MtrH.

Its subcellular location is the cell membrane. It catalyses the reaction 5-methyl-5,6,7,8-tetrahydromethanopterin + coenzyme M + 2 Na(+)(in) = 5,6,7,8-tetrahydromethanopterin + methyl-coenzyme M + 2 Na(+)(out). It participates in one-carbon metabolism; methanogenesis from CO(2); methyl-coenzyme M from 5,10-methylene-5,6,7,8-tetrahydromethanopterin: step 2/2. Its function is as follows. Part of a complex that catalyzes the formation of methyl-coenzyme M and tetrahydromethanopterin from coenzyme M and methyl-tetrahydromethanopterin. This is an energy-conserving, sodium-ion translocating step. The polypeptide is Tetrahydromethanopterin S-methyltransferase subunit F (mtrF) (Methanothermobacter marburgensis (strain ATCC BAA-927 / DSM 2133 / JCM 14651 / NBRC 100331 / OCM 82 / Marburg) (Methanobacterium thermoautotrophicum)).